The chain runs to 159 residues: Ribosomal RNA large subunit methyltransferase H (159 aa).

Residues L76, G108, and 127–132 (LSDMTF) each bind S-adenosyl-L-methionine.

Belongs to the RNA methyltransferase RlmH family. Homodimer.

The protein resides in the cytoplasm. The catalysed reaction is pseudouridine(1915) in 23S rRNA + S-adenosyl-L-methionine = N(3)-methylpseudouridine(1915) in 23S rRNA + S-adenosyl-L-homocysteine + H(+). Specifically methylates the pseudouridine at position 1915 (m3Psi1915) in 23S rRNA. This chain is Ribosomal RNA large subunit methyltransferase H, found in Acetivibrio thermocellus (strain ATCC 27405 / DSM 1237 / JCM 9322 / NBRC 103400 / NCIMB 10682 / NRRL B-4536 / VPI 7372) (Clostridium thermocellum).